The chain runs to 150 residues: Large ribosomal subunit protein uL23m (150 aa).

The protein belongs to the universal ribosomal protein uL23 family. As to quaternary structure, component of the mitochondrial ribosome large subunit (39S) which comprises a 16S rRNA and about 50 distinct proteins.

It localises to the mitochondrion. The sequence is that of Large ribosomal subunit protein uL23m (mRpL23) from Drosophila melanogaster (Fruit fly).